The chain runs to 113 residues: Large ribosomal subunit protein bL19 (113 aa).

This sequence belongs to the bacterial ribosomal protein bL19 family.

Functionally, this protein is located at the 30S-50S ribosomal subunit interface and may play a role in the structure and function of the aminoacyl-tRNA binding site. The polypeptide is Large ribosomal subunit protein bL19 (Rhodococcus jostii (strain RHA1)).